The primary structure comprises 336 residues: NADH-quinone oxidoreductase subunit H (336 aa).

The next 8 membrane-spanning stretches (helical) occupy residues 12–32 (FLKIVIVFSLALGIGAYLTWF), 84–104 (VVMALVPSILLLTIIPFGPGF), 118–138 (VNIALLLAFAFGSLSVYGTIF), 156–176 (AAVVIAYEVVLGFSVLGVILL), 193–213 (GVWFIFYQPVAFILYLFCMLA), 247–267 (LAEWYVNVIALSAIAVVLFFG), 274–294 (IFGPLSPYFWFVFKTFALVFF), and 313–333 (IAWKILLPIAILNVIITAVVV).

The protein belongs to the complex I subunit 1 family. As to quaternary structure, NDH-1 is composed of 14 different subunits. Subunits NuoA, H, J, K, L, M, N constitute the membrane sector of the complex.

It is found in the cell inner membrane. The enzyme catalyses a quinone + NADH + 5 H(+)(in) = a quinol + NAD(+) + 4 H(+)(out). NDH-1 shuttles electrons from NADH, via FMN and iron-sulfur (Fe-S) centers, to quinones in the respiratory chain. The immediate electron acceptor for the enzyme in this species is believed to be ubiquinone. Couples the redox reaction to proton translocation (for every two electrons transferred, four hydrogen ions are translocated across the cytoplasmic membrane), and thus conserves the redox energy in a proton gradient. This subunit may bind ubiquinone. In Aquifex aeolicus (strain VF5), this protein is NADH-quinone oxidoreductase subunit H.